Reading from the N-terminus, the 82-residue chain is Teratocyte protein CftICK-IV (82 aa).

Residues 1-21 (MAKILLTFIILTCLIVTITPA) form the signal peptide.

Contains 4 disulfide bonds. Abundantly expressed by teratocytes, which are extra-embryonic cells released by parasitoid wasps into their hosts during larval eclosion.

It is found in the secreted. This endoparasitoid wasp peptide has immununosuppressive and insecticidal activities. Suppress cellular immunity which is detectable as a reduction of hemocyte spread index in the host. In vivo, ingestion of this peptide moderately reduces leaf consumption of D.saccharalis, a permissive host for the lepidoptere C.flavipes. The chain is Teratocyte protein CftICK-IV from Cotesia flavipes (Parasitic wasp).